Consider the following 509-residue polypeptide: ATP synthase subunit alpha, mitochondrial (509 aa).

ATP is bound at residue 171-178 (GDRQTGKT).

The protein belongs to the ATPase alpha/beta chains family. F-type ATPases have 2 components, CF(1) - the catalytic core - and CF(0) - the membrane proton channel. CF(1) has five subunits: alpha(3), beta(3), gamma(1), delta(1), epsilon(1). CF(0) has three main subunits: a, b and c.

The protein resides in the mitochondrion. It is found in the mitochondrion inner membrane. Its function is as follows. Mitochondrial membrane ATP synthase (F(1)F(0) ATP synthase or Complex V) produces ATP from ADP in the presence of a proton gradient across the membrane which is generated by electron transport complexes of the respiratory chain. F-type ATPases consist of two structural domains, F(1) - containing the extramembraneous catalytic core, and F(0) - containing the membrane proton channel, linked together by a central stalk and a peripheral stalk. During catalysis, ATP synthesis in the catalytic domain of F(1) is coupled via a rotary mechanism of the central stalk subunits to proton translocation. Subunits alpha and beta form the catalytic core in F(1). Rotation of the central stalk against the surrounding alpha(3)beta(3) subunits leads to hydrolysis of ATP in three separate catalytic sites on the beta subunits. Subunit alpha does not bear the catalytic high-affinity ATP-binding sites. This chain is ATP synthase subunit alpha, mitochondrial (ATPA), found in Triticum aestivum (Wheat).